We begin with the raw amino-acid sequence, 151 residues long: Large-conductance mechanosensitive channel (151 aa).

Transmembrane regions (helical) follow at residues 14 to 34, 38 to 58, and 86 to 106; these read VVDMAVGIIVGGAFGTIVNTL, VLMPPLGLLIGGVDFTNLYLI, and GLFLNSVISFLIMAFAVFLLV.

It belongs to the MscL family. In terms of assembly, homopentamer.

It is found in the cell inner membrane. Channel that opens in response to stretch forces in the membrane lipid bilayer. May participate in the regulation of osmotic pressure changes within the cell. The chain is Large-conductance mechanosensitive channel from Pelodictyon phaeoclathratiforme (strain DSM 5477 / BU-1).